A 123-amino-acid polypeptide reads, in one-letter code: MRGTAGVPDQPVPTPTPSVPTSSSPVPKPPTQGNKKWCVPKAEATDAQLQSNIDYVCSQSGMDCGPIQANGACFNPNTVRAHASYAMNSWYQSKGRNDFDCDFSGTGAITSSDPSNGSCSFLS.

An N-terminal signal peptide occupies residues 1–21 (MRGTAGVPDQPVPTPTPSVPT). Positions 1-37 (MRGTAGVPDQPVPTPTPSVPTSSSPVPKPPTQGNKKW) are disordered. Cys-38 and Cys-101 form a disulfide bridge.

The N-terminus is blocked. Post-translationally, phosphorylated at Ser-24 when expressed as a recombinant protein in a heterologous system. In terms of processing, not glycosylated. Contains two additional disulfide bonds. In terms of tissue distribution, expressed in mature and germinating pollen.

It localises to the cytoplasmic vesicle. Its function is as follows. Carbohydrate-binding protein binding preferentially 1,3-beta-glucans. May be involved in pollen tube wall re-formation during germination. The polypeptide is Major pollen allergen Ole e 10 (Olea europaea (Common olive)).